A 494-amino-acid chain; its full sequence is DnaJ homolog subfamily C member 7 (494 aa).

Position 2 is an N-acetylalanine (alanine 2). 8 TPR repeats span residues 28 to 61 (AESF…CPNN), 62 to 95 (ASYY…DDSF), 96 to 129 (VRGH…DHKN), 142 to 175 (VMEY…APAC), 210 to 243 (ADAL…APDH), 256 to 289 (LKAK…DPNN), 294 to 327 (AKLY…DDTY), and 328 to 361 (IKAY…EKTK). The J domain occupies 381-451 (DYYKILGVDK…KKKTRYDSGQ (71 aa)). At serine 393 the chain carries Phosphoserine.

In terms of assembly, associates with complexes containing chaperones HSP70 and HSP90. Interacts with the GAP domain of NF1. Interacts with HSP90AA1. Interacts with HSPA1A/B; the interaction is enhanced by ATP. Interacts with HSP90AB1. Interacts with PGR. Interacts with RAD9A; the interaction is interrupted by UV and heat shock treatments. Interacts with HUS1 and RAD1. Interacts with NR1I3; this complex may also include HSP90 Interacts with HSPA8. As to expression, widely expressed with high levels in liver, skeletal muscle, kidney and testis.

The protein resides in the cytoplasm. The protein localises to the nucleus. It is found in the cytoskeleton. In terms of biological role, acts as a co-chaperone regulating the molecular chaperones HSP70 and HSP90 in folding of steroid receptors, such as the glucocorticoid receptor and the progesterone receptor. Proposed to act as a recycling chaperone by facilitating the return of chaperone substrates to early stages of chaperoning if further folding is required. In vitro, induces ATP-independent dissociation of HSP90 but not of HSP70 from the chaperone-substrate complexes. Recruits NR1I3 to the cytoplasm. The polypeptide is DnaJ homolog subfamily C member 7 (Dnajc7) (Mus musculus (Mouse)).